A 485-amino-acid polypeptide reads, in one-letter code: Bifunctional protein GlmU (485 aa).

Positions 1–241 are pyrophosphorylase; the sequence is MSASDFSSAV…ARELAGVNDR (241 aa). UDP-N-acetyl-alpha-D-glucosamine is bound by residues 13–16, lysine 27, glutamine 84, and 89–90; these read LAAG and GT. Aspartate 114 is a binding site for Mg(2+). UDP-N-acetyl-alpha-D-glucosamine-binding residues include glycine 151, glutamate 166, asparagine 181, and asparagine 239. Asparagine 239 is a binding site for Mg(2+). Residues 242–262 form a linker region; it reads VQLAEAGAELNRRTVIAAMRG. Positions 263–485 are N-acetyltransferase; sequence GATIVDPATT…AAQNVHNQEG (223 aa). Residues arginine 344 and lysine 362 each coordinate UDP-N-acetyl-alpha-D-glucosamine. The Proton acceptor role is filled by histidine 374. Positions 377 and 388 each coordinate UDP-N-acetyl-alpha-D-glucosamine. Residues alanine 391, 397–398, serine 416, and alanine 434 contribute to the acetyl-CoA site; that span reads NY. Positions 465-485 are disordered; it reads RPGTAAAQAAEAAQNVHNQEG. Low complexity predominate over residues 469 to 478; it reads AAAQAAEAAQ.

In the N-terminal section; belongs to the N-acetylglucosamine-1-phosphate uridyltransferase family. It in the C-terminal section; belongs to the transferase hexapeptide repeat family. In terms of assembly, homotrimer. Requires Mg(2+) as cofactor.

The protein localises to the cytoplasm. The enzyme catalyses alpha-D-glucosamine 1-phosphate + acetyl-CoA = N-acetyl-alpha-D-glucosamine 1-phosphate + CoA + H(+). It carries out the reaction N-acetyl-alpha-D-glucosamine 1-phosphate + UTP + H(+) = UDP-N-acetyl-alpha-D-glucosamine + diphosphate. It functions in the pathway nucleotide-sugar biosynthesis; UDP-N-acetyl-alpha-D-glucosamine biosynthesis; N-acetyl-alpha-D-glucosamine 1-phosphate from alpha-D-glucosamine 6-phosphate (route II): step 2/2. The protein operates within nucleotide-sugar biosynthesis; UDP-N-acetyl-alpha-D-glucosamine biosynthesis; UDP-N-acetyl-alpha-D-glucosamine from N-acetyl-alpha-D-glucosamine 1-phosphate: step 1/1. It participates in bacterial outer membrane biogenesis; LPS lipid A biosynthesis. Its function is as follows. Catalyzes the last two sequential reactions in the de novo biosynthetic pathway for UDP-N-acetylglucosamine (UDP-GlcNAc). The C-terminal domain catalyzes the transfer of acetyl group from acetyl coenzyme A to glucosamine-1-phosphate (GlcN-1-P) to produce N-acetylglucosamine-1-phosphate (GlcNAc-1-P), which is converted into UDP-GlcNAc by the transfer of uridine 5-monophosphate (from uridine 5-triphosphate), a reaction catalyzed by the N-terminal domain. The protein is Bifunctional protein GlmU of Corynebacterium glutamicum (strain R).